Here is a 190-residue protein sequence, read N- to C-terminus: dCTP deaminase, dUMP-forming (190 aa).

Residues 101 to 106 (KSSLGR), aspartate 119, 127 to 129 (TLE), glutamine 148, tyrosine 162, and glutamine 174 each bind dCTP. Glutamate 129 functions as the Proton donor/acceptor in the catalytic mechanism. Residues 161-190 (PYGSSGVGSKYQGQRGPTPSRSYQNFIRST) are disordered. Over residues 171–190 (YQGQRGPTPSRSYQNFIRST) the composition is skewed to polar residues.

This sequence belongs to the dCTP deaminase family. Homotrimer.

The enzyme catalyses dCTP + 2 H2O = dUMP + NH4(+) + diphosphate. The protein operates within pyrimidine metabolism; dUMP biosynthesis; dUMP from dCTP: step 1/1. Bifunctional enzyme that catalyzes both the deamination of dCTP to dUTP and the hydrolysis of dUTP to dUMP without releasing the toxic dUTP intermediate. This chain is dCTP deaminase, dUMP-forming, found in Mycobacterium marinum (strain ATCC BAA-535 / M).